We begin with the raw amino-acid sequence, 101 residues long: MIPGEVIPKAGEIELNAGAPQVVLEVSNTGDRPIQVGSHYHFYETNGALSFDREKARGMRLDIAAGTAVRFEPGQAREVRLVPLSGARKVFGFQQKIMGDL.

This sequence belongs to the urease beta subunit family. Heterotrimer of UreA (gamma), UreB (beta) and UreC (alpha) subunits. Three heterotrimers associate to form the active enzyme.

The protein localises to the cytoplasm. The catalysed reaction is urea + 2 H2O + H(+) = hydrogencarbonate + 2 NH4(+). The protein operates within nitrogen metabolism; urea degradation; CO(2) and NH(3) from urea (urease route): step 1/1. This chain is Urease subunit beta, found in Chelativorans sp. (strain BNC1).